Consider the following 269-residue polypeptide: Large ribosomal subunit protein uL3m (269 aa).

The transit peptide at 1-19 (MSKFLQGSIFSISKLHVRY) directs the protein to the mitochondrion.

This sequence belongs to the universal ribosomal protein uL3 family. As to quaternary structure, component of the mitochondrial large ribosomal subunit (mt-LSU). Mature yeast 74S mitochondrial ribosomes consist of a small (37S) and a large (54S) subunit. The 37S small subunit contains a 15S ribosomal RNA (15S mt-rRNA) and 34 different proteins. The 54S large subunit contains a 21S rRNA (21S mt-rRNA) and 46 different proteins.

Its subcellular location is the mitochondrion. Functionally, component of the mitochondrial ribosome (mitoribosome), a dedicated translation machinery responsible for the synthesis of mitochondrial genome-encoded proteins, including at least some of the essential transmembrane subunits of the mitochondrial respiratory chain. The mitoribosomes are attached to the mitochondrial inner membrane and translation products are cotranslationally integrated into the membrane. This chain is Large ribosomal subunit protein uL3m (MRPL9), found in Saccharomyces cerevisiae (strain ATCC 204508 / S288c) (Baker's yeast).